We begin with the raw amino-acid sequence, 170 residues long: Arginine repressor (170 aa).

Belongs to the ArgR family.

It localises to the cytoplasm. It participates in amino-acid biosynthesis; L-arginine biosynthesis [regulation]. Regulates arginine biosynthesis genes. This Bifidobacterium longum (strain DJO10A) protein is Arginine repressor.